The sequence spans 369 residues: Short chain dehydrogenase rstn4 (369 aa).

NADP(+)-binding residues include K88, D111, N138, Y234, and K238. Y234 acts as the Proton donor in catalysis. K238 serves as the catalytic Lowers pKa of active site Tyr.

Belongs to the short-chain dehydrogenases/reductases (SDR) family.

It participates in antifungal biosynthesis. Functionally, short chain dehydrogenase; part of the gene cluster that mediates the biosynthesis of the tetrahydropyranyl antifungal agent restricticin that acts as an inhibitor of CYP51 and blocks the ergosterol biosynthesis. The highly reducing polyketide synthase rstn3, the short chain dehydrogenase rstn4, the cyclase rstn5, the FAD-dependent monooxygenase rstn6 and the enoylreductase rstn7 are required to generate the first stable intermediate desmethylrestrictinol. Rstn3 with rstn7 biosynthesize the first polyketide chain intermediate that is reduced by rstn4, followed by epoxidation by rstn6 before 6-endo cyclization via epoxide opening by rstn5 leads to desmethylrestrictinol. The methyltransferase rstn1 then catalyzes the C4 O-methylation of desmethylrestrictinol to produce restrictinol, and the nonribosomal peptide synthetase rstn8 catalyzes the C3 esterification of restrictinol with glycine that leads to restricticin. This Aspergillus nomiae NRRL (strain ATCC 15546 / NRRL 13137 / CBS 260.88 / M93) protein is Short chain dehydrogenase rstn4.